We begin with the raw amino-acid sequence, 315 residues long: Taste receptor type 2 member 3 (315 aa).

At 1–5 (MGLTD) the chain is on the extracellular side. A helical membrane pass occupies residues 6 to 26 (GVFLIVCGAQFTLGILXNGFI). Over 27–41 (GLVNGRSWFKTKRMS) the chain is Cytoplasmic. A helical transmembrane segment spans residues 42–62 (LSDFIIATLALSRIILLCIIL). Residues 63-93 (TDSFLIVFSVKEHDSGIIMQLIDVFWTFTNH) are Extracellular-facing. A helical membrane pass occupies residues 94–114 (LSIWFATCLGVLYCLKIASFS). Residues 115-127 (HPTFLWLKWRVSR) are Cytoplasmic-facing. The helical transmembrane segment at 128-148 (VMVWMLLGALLLSCGSTASLI) threads the bilayer. Over 149-185 (NEFKLYSVLRGIEATRNVTEHFRKKRNEYYLIHVLGT) the chain is Extracellular. The N-linked (GlcNAc...) asparagine glycan is linked to N165. A helical membrane pass occupies residues 186–206 (LWYLPPLVVSLASYFLLIFSL). Residues 207–233 (GRHTRQMLQNSTSSRDPSTEAHKRAIR) are Cytoplasmic-facing. The helical transmembrane segment at 234-254 (IILSFFFLFLLYFLAFLIASF) threads the bilayer. Residues 255-265 (GNFLPETKMAK) are Extracellular-facing. The helical transmembrane segment at 266 to 286 (MIGEVMTMFYPAGHSFIVILG) threads the bilayer. The Cytoplasmic portion of the chain corresponds to 287–315 (NSKLKQTFVEMLRCESGHLKPGSKGPIFS).

Belongs to the G-protein coupled receptor T2R family.

The protein resides in the membrane. Functionally, gustducin-coupled receptor implicated in the perception of bitter compounds in the oral cavity and the gastrointestinal tract. Signals through PLCB2 and the calcium-regulated cation channel TRPM5. The polypeptide is Taste receptor type 2 member 3 (TAS2R3) (Papio hamadryas (Hamadryas baboon)).